We begin with the raw amino-acid sequence, 101 residues long: NAD(P)H-quinone oxidoreductase subunit 4L, chloroplastic (101 aa).

3 consecutive transmembrane segments (helical) span residues 2 to 22 (MLEY…YGLI), 32 to 52 (MCLE…SDFF), and 61 to 81 (IFSI…PAIV).

The protein belongs to the complex I subunit 4L family. In terms of assembly, NDH is composed of at least 16 different subunits, 5 of which are encoded in the nucleus.

The protein resides in the plastid. It localises to the chloroplast thylakoid membrane. The enzyme catalyses a plastoquinone + NADH + (n+1) H(+)(in) = a plastoquinol + NAD(+) + n H(+)(out). It carries out the reaction a plastoquinone + NADPH + (n+1) H(+)(in) = a plastoquinol + NADP(+) + n H(+)(out). Its function is as follows. NDH shuttles electrons from NAD(P)H:plastoquinone, via FMN and iron-sulfur (Fe-S) centers, to quinones in the photosynthetic chain and possibly in a chloroplast respiratory chain. The immediate electron acceptor for the enzyme in this species is believed to be plastoquinone. Couples the redox reaction to proton translocation, and thus conserves the redox energy in a proton gradient. In Populus trichocarpa (Western balsam poplar), this protein is NAD(P)H-quinone oxidoreductase subunit 4L, chloroplastic.